The following is a 492-amino-acid chain: T-box transcription factor TBX5-A (492 aa).

Residues 1–43 (MADSEDTFRLQNSPSDSEPKDLQNEGKSDKQNAAVSKSPSSQT) form a disordered region. A compositionally biased stretch (basic and acidic residues) spans 17 to 30 (SEPKDLQNEGKSDK). Over residues 31-43 (QNAAVSKSPSSQT) the composition is skewed to polar residues. The T-box DNA-binding region spans 62–237 (LWTKFHEVGT…NNPFAKGFRG (176 aa)). The interval 331-352 (AGEHPYKKPYVESSSSEDDHYY) is disordered.

As to quaternary structure, monomer. Homodimer (via the T-box); binds DNA as homodimer. In terms of tissue distribution, expressed in the dorsal optic cup of developing eye, pectoral fin buds and heart. At 31 hpf, when the pectoral fin buds have begun bulging outwards, restricted expression is detected throughout the mesenchyme of the early fin buds and these high levels of expression continue until later stages.

The protein resides in the nucleus. Its subcellular location is the cytoplasm. Functionally, required for pectoral fin formation. Together with tbx5b, involved in eye and heart development. Required for the looping stage of heart development. May bind to the core DNA motif of promoters. The protein is T-box transcription factor TBX5-A (tbx5a) of Danio rerio (Zebrafish).